A 129-amino-acid chain; its full sequence is Small ribosomal subunit protein uS8my (129 aa).

It belongs to the universal ribosomal protein uS8 family. As to quaternary structure, component of the mitochondrial ribosome small subunit.

It is found in the mitochondrion. The protein is Small ribosomal subunit protein uS8my (RPS15AE) of Arabidopsis thaliana (Mouse-ear cress).